The sequence spans 247 residues: tRNA (guanine-N(1)-)-methyltransferase (247 aa).

S-adenosyl-L-methionine-binding positions include Gly115 and 134–139 (IGDFVL).

The protein belongs to the RNA methyltransferase TrmD family. In terms of assembly, homodimer.

It is found in the cytoplasm. The catalysed reaction is guanosine(37) in tRNA + S-adenosyl-L-methionine = N(1)-methylguanosine(37) in tRNA + S-adenosyl-L-homocysteine + H(+). In terms of biological role, specifically methylates guanosine-37 in various tRNAs. This is tRNA (guanine-N(1)-)-methyltransferase from Anaeromyxobacter dehalogenans (strain 2CP-C).